Consider the following 674-residue polypeptide: Sodium/myo-inositol cotransporter 2 (674 aa).

Residues 1–27 (MESSTSSPQPPLSDPLDPFPQRSLEPG) lie on the Extracellular side of the membrane. The helical transmembrane segment at 28-48 (DIAVLVLYFLFVLAVGLWSTV) threads the bilayer. Residues 49 to 56 (KTKRDTVK) are Cytoplasmic-facing. The chain crosses the membrane as a helical span at residues 57 to 77 (GYFLAGGDMVWWPVGASLFAS). Residues 78-102 (NVGSGHFVGLAGSGAATGISVAAYE) lie on the Extracellular side of the membrane. The helical transmembrane segment at 103–123 (FNGMFSVLMLAWIFLPIYIAG) threads the bilayer. Over 124–140 (QVTTMPEYLRRRFGGSR) the chain is Cytoplasmic. Residues 141 to 161 (IAITLAVLYLFIYIFTKISVD) traverse the membrane as a helical segment. Residues 162 to 180 (MYAGAIFIQQSLHLDLYLS) are Extracellular-facing. Residues 181–201 (VVGLLAVTALYTVAGGLAAVI) form a helical membrane-spanning segment. The Cytoplasmic portion of the chain corresponds to 202 to 208 (YTDALQT). Residues 209–229 (LIMLVGALTLMGYSFAAVGGM) form a helical membrane-spanning segment. Residues 230–272 (EGLQEKYFLALPSNRSENSSCGLPREDAFHLFRDPLTSDLPWP) are Extracellular-facing. Residues 273 to 293 (GILFGMSIPSLWYWCTDQVIV) traverse the membrane as a helical segment. Residues 294–308 (QRSLAAKNLSHAKGG) are Cytoplasmic-facing. A helical transmembrane segment spans residues 309-329 (SLMAAYLKVLPLFIMVFPGMV). Residues 330 to 375 (SRILFPDQVACADPETCQRVCNNPSGCSDIAYPKLVLELLPTGLRG) lie on the Extracellular side of the membrane. The helical transmembrane segment at 376–396 (LMMAVMVAALMSSLTSIFNSA) threads the bilayer. The Cytoplasmic portion of the chain corresponds to 397–418 (STIFTMDLWNHVRPRASEKELM). Residues 419 to 439 (IVGRVFVLLLVLVSVLWIPVV) traverse the membrane as a helical segment. Residues 440-446 (QASQGGQ) are Extracellular-facing. Residues 447–467 (LFVYIQAISSYLQPPVAMVFV) form a helical membrane-spanning segment. Residues 468-479 (LGCFWKRANEKG) are Cytoplasmic-facing. Residues 480–500 (AFWGLVLGLLLGFIRLILDFI) form a helical membrane-spanning segment. Over 501–521 (YVEPACHQPDERPSVVKNVHY) the chain is Extracellular. Residues 522–542 (LYFSMILSSVTVLTVTVMSLL) traverse the membrane as a helical segment. Over 543-653 (TEPPSKEMIS…SIEENPVVKT (111 aa)) the chain is Cytoplasmic. Residues 654–674 (LLDVNCLLCICCAFFLWGYFA) traverse the membrane as a helical segment.

Belongs to the sodium:solute symporter (SSF) (TC 2.A.21) family. As to expression, expressed in brain, lung and kidney. In the kidney, strongly expressed in the cortex, at the luminal side of proximal convoluted tubules and in BBMVs. Weaker expression observed in the medulla (at protein level).

The protein localises to the membrane. It is found in the apical cell membrane. The enzyme catalyses myo-inositol(out) + 2 Na(+)(out) = myo-inositol(in) + 2 Na(+)(in). It catalyses the reaction 1D-chiro-inositol(out) + 2 Na(+)(out) = 1D-chiro-inositol(in) + 2 Na(+)(in). It carries out the reaction D-glucose(out) + 2 Na(+)(out) = D-glucose(in) + 2 Na(+)(in). The catalysed reaction is D-xylose(out) + 2 Na(+)(out) = D-xylose(in) + 2 Na(+)(in). MI transport activity stimulated five-fold under 24 hour hypertonic shock conditions. MI inward currents were gradually inhibited as increasing amounts of phlorizin were added to the superfusion medium. When sodium is replaced by potassium, MI uptake is dramatically reduced and in the presence of L-fucose or D-chiro-inositol (DCI), the specific accumulation of tracer amounts of MI is also reduced. Involved in the sodium-dependent cotransport of myo-inositol (MI) with a Na(+):MI stoichiometry of 2:1. Exclusively responsible for apical MI transport and absorption in intestine. Can also transport D-chiro-inositol (DCI) but not L-fucose. Exhibits stereospecific cotransport of both D-glucose and D-xylose. May induce apoptosis through the TNF-alpha, PDCD1 pathway. May play a role in the regulation of MI concentration in serum, involving reabsorption in at least the proximal tubule of the kidney. This chain is Sodium/myo-inositol cotransporter 2, found in Oryctolagus cuniculus (Rabbit).